Reading from the N-terminus, the 201-residue chain is Transgelin (201 aa).

At A2 the chain carries N-acetylalanine. The region spanning 24–137 (EELEERLVEW…RTLMALGSLA (114 aa)) is the Calponin-homology (CH) domain. Position 166 is a phosphoserine (S166). Position 172 is an N6-acetyllysine (K172). Residues 175–200 (IGLQMGSNRGASQAGMTGYGRPRQII) form a Calponin-like repeat. Residue S181 is modified to Phosphoserine. The residue at position 183 (R183) is an Omega-N-methylarginine.

This sequence belongs to the calponin family.

It is found in the cytoplasm. Actin cross-linking/gelling protein. This Mus musculus (Mouse) protein is Transgelin (Tagln).